Here is a 366-residue protein sequence, read N- to C-terminus: MNFTVGFKPLLGDAHSMDNLEKQLICPICLEMFSKPVVILPCQHNLCRKCANDVFQASNPLWQSRSSTTVSSGGRFRCPSCRHEVVLDRHGVYGLQRNLLVENIIDIYKQESSRPLHSKAEQHLMCEEHEDEKINIYCLSCEVPTCSLCKVFGAHKDCEVAPLPTIYKRQKSELSDGIAMLVAGNDRVQAVITQMEEVCQTIEENSRRQKQLLNQRFEGLCAVLEERKGELLQALAREQEEKLQRVRGLIRQYGDHLEASSKLVESAIQSMEEPQMALYLQQAKELINKVGTMSKVELAGRPEPGYERMDQFTVSVEHVAEMLRTIDFQPGTSGEEEDEEVAVEGEEGNAGPEEERTDGRESTGQH.

The RING-type zinc-finger motif lies at 26–82 (CPICLEMFSKPVVILPCQHNLCRKCANDVFQASNPLWQSRSSTTVSSGGRFRCPSCR). The segment at 121–163 (EQHLMCEEHEDEKINIYCLSCEVPTCSLCKVFGAHKDCEVAPL) adopts a B box-type zinc-finger fold. Zn(2+)-binding residues include cysteine 126, histidine 129, cysteine 149, and histidine 155. The tract at residues 168 to 211 (KRQKSELSDGIAMLVAGNDRVQAVITQMEEVCQTIEENSRRQKQ) is mediates microtubule-binding and homooligomerization. The stretch at 185–258 (NDRVQAVITQ…LIRQYGDHLE (74 aa)) forms a coiled coil. The COS domain maps to 271–329 (MEEPQMALYLQQAKELINKVGTMSKVELAGRPEPGYERMDQFTVSVEHVAEMLRTIDFQ). Residues 326 to 366 (IDFQPGTSGEEEDEEVAVEGEEGNAGPEEERTDGRESTGQH) are disordered. Over residues 334-347 (GEEEDEEVAVEGEE) the composition is skewed to acidic residues. Basic and acidic residues predominate over residues 353–366 (EEERTDGRESTGQH).

Homooligomer and heterooligomer. Interacts with TRIM63 and probably with TRIM55. Interacts with tubulin.

Its subcellular location is the cytoplasm. It is found in the cytoskeleton. The protein localises to the myofibril. It localises to the sarcomere. The protein resides in the z line. Its function is as follows. May bind and stabilize microtubules during myotubes formation. This Bos taurus (Bovine) protein is Tripartite motif-containing protein 54 (TRIM54).